Reading from the N-terminus, the 90-residue chain is uncharacterized protein (90 aa).

It localises to the mitochondrion. This is an uncharacterized protein from Ascobolus immersus.